A 335-amino-acid polypeptide reads, in one-letter code: Eukaryotic translation initiation factor 3 subunit I (335 aa).

WD repeat units follow at residues 8–47, 50–91, 145–184, 189–228, and 286–325; these read GHER…RLGT, GHQG…KVWD, CTES…QLEN, EFDN…ILKT, and GHFG…FDFM.

This sequence belongs to the eIF-3 subunit I family. As to quaternary structure, component of the eukaryotic translation initiation factor 3 (eIF-3) complex.

The protein resides in the cytoplasm. In terms of biological role, component of the eukaryotic translation initiation factor 3 (eIF-3) complex, which is involved in protein synthesis of a specialized repertoire of mRNAs and, together with other initiation factors, stimulates binding of mRNA and methionyl-tRNAi to the 40S ribosome. The eIF-3 complex specifically targets and initiates translation of a subset of mRNAs involved in cell proliferation. This is Eukaryotic translation initiation factor 3 subunit I (tif34) from Aspergillus oryzae (strain ATCC 42149 / RIB 40) (Yellow koji mold).